The primary structure comprises 1089 residues: Probable transport protein MmpL8 (1089 aa).

The interval 1–26 (MCDVLMQPVRTPRPSTNLRSKPLRPT) is disordered. A run of 12 helical transmembrane segments spans residues 44 to 64 (WVVI…VPSL), 222 to 242 (ITIL…TMVL), 257 to 277 (LVAI…IFMS), 316 to 336 (IGKV…GMVF), 349 to 369 (LGIS…ALMV), 400 to 420 (KTHL…AGLA), 555 to 575 (AIST…LLGG), 874 to 894 (IIAM…RAIV), 898 to 918 (YLIG…VIVF), 930 to 950 (IPGL…MLLI), 973 to 993 (GGVI…LVFA), and 996 to 1016 (GSVV…TFLV). Positions 1056-1078 (RTKRKPLLPKEEEEQSPPDDDDL) are disordered. A compositionally biased stretch (acidic residues) spans 1066-1078 (EEEEQSPPDDDDL).

Belongs to the resistance-nodulation-cell division (RND) (TC 2.A.6) family. MmpL subfamily.

The protein localises to the cell membrane. The polypeptide is Probable transport protein MmpL8 (mmpL8) (Mycobacterium bovis (strain ATCC BAA-935 / AF2122/97)).